A 439-amino-acid polypeptide reads, in one-letter code: ATP-dependent RNA helicase RhlB (439 aa).

The short motif at Q9 to A37 is the Q motif element. Residues L40–V219 form the Helicase ATP-binding domain. A53–T60 contributes to the ATP binding site. The DEAD box signature appears at D165–D168. In terms of domain architecture, Helicase C-terminal spans K243–L390. The segment at P395–P439 is disordered. Positions S425–P439 are enriched in basic residues.

The protein belongs to the DEAD box helicase family. RhlB subfamily. Component of the RNA degradosome, which is a multiprotein complex involved in RNA processing and mRNA degradation.

It is found in the cytoplasm. It carries out the reaction ATP + H2O = ADP + phosphate + H(+). Its function is as follows. DEAD-box RNA helicase involved in RNA degradation. Has RNA-dependent ATPase activity and unwinds double-stranded RNA. The sequence is that of ATP-dependent RNA helicase RhlB from Shewanella sp. (strain ANA-3).